The following is a 150-amino-acid chain: S-protein homolog 28 (150 aa).

An N-linked (GlcNAc...) asparagine glycan is attached at N122.

Belongs to the plant self-incompatibility (S1) protein family.

The protein resides in the secreted. This chain is S-protein homolog 28, found in Arabidopsis thaliana (Mouse-ear cress).